The primary structure comprises 528 residues: Lanosterol 14-alpha demethylase (528 aa).

Position 470 (Cys-470) interacts with heme.

The protein belongs to the cytochrome P450 family. Heme is required as a cofactor.

Its subcellular location is the membrane. It carries out the reaction a 14alpha-methyl steroid + 3 reduced [NADPH--hemoprotein reductase] + 3 O2 = a Delta(14) steroid + formate + 3 oxidized [NADPH--hemoprotein reductase] + 4 H2O + 4 H(+). It catalyses the reaction a 14alpha-methyl steroid + reduced [NADPH--hemoprotein reductase] + O2 = a 14alpha-hydroxymethyl steroid + oxidized [NADPH--hemoprotein reductase] + H2O + H(+). The enzyme catalyses a 14alpha-hydroxymethyl steroid + reduced [NADPH--hemoprotein reductase] + O2 = a 14alpha-formyl steroid + oxidized [NADPH--hemoprotein reductase] + 2 H2O + H(+). The catalysed reaction is a 14alpha-formyl steroid + reduced [NADPH--hemoprotein reductase] + O2 = a Delta(14) steroid + formate + oxidized [NADPH--hemoprotein reductase] + H2O + 2 H(+). It carries out the reaction lanosterol + 3 reduced [NADPH--hemoprotein reductase] + 3 O2 = 4,4-dimethyl-5alpha-cholesta-8,14,24-trien-3beta-ol + formate + 3 oxidized [NADPH--hemoprotein reductase] + 4 H2O + 4 H(+). It catalyses the reaction lanosterol + reduced [NADPH--hemoprotein reductase] + O2 = 32-hydroxylanosterol + oxidized [NADPH--hemoprotein reductase] + H2O + H(+). The enzyme catalyses 32-hydroxylanosterol + reduced [NADPH--hemoprotein reductase] + O2 = 32-oxolanosterol + oxidized [NADPH--hemoprotein reductase] + 2 H2O + H(+). The catalysed reaction is 32-oxolanosterol + reduced [NADPH--hemoprotein reductase] + O2 = 4,4-dimethyl-5alpha-cholesta-8,14,24-trien-3beta-ol + formate + oxidized [NADPH--hemoprotein reductase] + H2O + 2 H(+). It carries out the reaction eburicol + 3 reduced [NADPH--hemoprotein reductase] + 3 O2 = 14-demethyleburicol + formate + 3 oxidized [NADPH--hemoprotein reductase] + 4 H2O + 4 H(+). It catalyses the reaction eburicol + reduced [NADPH--hemoprotein reductase] + O2 = 32-hydroxyeburicol + oxidized [NADPH--hemoprotein reductase] + H2O + H(+). The enzyme catalyses 32-hydroxyeburicol + reduced [NADPH--hemoprotein reductase] + O2 = 32-oxoeburicol + oxidized [NADPH--hemoprotein reductase] + 2 H2O + H(+). The catalysed reaction is 32-oxoeburicol + reduced [NADPH--hemoprotein reductase] + O2 = 14-demethyleburicol + formate + oxidized [NADPH--hemoprotein reductase] + H2O + 2 H(+). The protein operates within steroid biosynthesis; zymosterol biosynthesis; zymosterol from lanosterol: step 1/6. Sterol 14alpha-demethylase that plays a critical role in the third module of ergosterol biosynthesis pathway, being ergosterol the major sterol component in fungal membranes that participates in a variety of functions. The third module or late pathway involves the ergosterol synthesis itself through consecutive reactions that mainly occur in the endoplasmic reticulum (ER) membrane. In filamentous fungi, during the initial step of this module, lanosterol (lanosta-8,24-dien-3beta-ol) can be metabolized to eburicol. Sterol 14alpha-demethylase catalyzes the three-step oxidative removal of the 14alpha-methyl group (C-32) of both these sterols in the form of formate, and converts eburicol and lanosterol to 14-demethyleburicol (4,4,24-trimethylergosta-8,14,24(28)-trienol) and 4,4-dimethyl-5alpha-cholesta-8,14,24-trien-3beta-ol, respectively, which are further metabolized by other enzymes in the pathway to ergosterol. Can also use substrates not intrinsic to fungi, such as 24,25-dihydrolanosterol (DHL), producing 4,4-dimethyl-8,14-cholestadien-3-beta-ol, but at lower rates than the endogenous substrates. This is Lanosterol 14-alpha demethylase (ERG11) from Candida tropicalis (Yeast).